The sequence spans 173 residues: MEEKIRRCVLQVLEATAGTKGEGVYLVSLSIKGSGKGTSIEVLVDTDTGIRIDQCAFLSRRIRECLEVEEESDGMSGDDFNLDVASPGLGKAIILQRQYARHVGRLFRVTFREEDGSMTEISGHLREILFPEEENASLVIEPLGKKKAGKKVSSENRTLRLDRVIRAVPEAEL.

It belongs to the RimP family.

The protein resides in the cytoplasm. Its function is as follows. Required for maturation of 30S ribosomal subunits. The polypeptide is Ribosome maturation factor RimP (Chlorobium phaeobacteroides (strain DSM 266 / SMG 266 / 2430)).